The chain runs to 327 residues: Aspartate carbamoyltransferase catalytic subunit (327 aa).

2 residues coordinate carbamoyl phosphate: R67 and T68. An L-aspartate-binding site is contributed by K95. Carbamoyl phosphate-binding residues include R117, H145, and Q148. Positions 178 and 232 each coordinate L-aspartate. G273 and P274 together coordinate carbamoyl phosphate.

Belongs to the aspartate/ornithine carbamoyltransferase superfamily. ATCase family. Heterododecamer (2C3:3R2) of six catalytic PyrB chains organized as two trimers (C3), and six regulatory PyrI chains organized as three dimers (R2).

It catalyses the reaction carbamoyl phosphate + L-aspartate = N-carbamoyl-L-aspartate + phosphate + H(+). It participates in pyrimidine metabolism; UMP biosynthesis via de novo pathway; (S)-dihydroorotate from bicarbonate: step 2/3. Its function is as follows. Catalyzes the condensation of carbamoyl phosphate and aspartate to form carbamoyl aspartate and inorganic phosphate, the committed step in the de novo pyrimidine nucleotide biosynthesis pathway. In Parvibaculum lavamentivorans (strain DS-1 / DSM 13023 / NCIMB 13966), this protein is Aspartate carbamoyltransferase catalytic subunit.